A 329-amino-acid chain; its full sequence is BRISC and BRCA1-A complex member 1 (329 aa).

Met-1 bears the N-acetylmethionine mark. The disordered stretch occupies residues 1 to 84; the sequence is MEVAEPSSPT…VPPPAPEVQI (84 aa). A Phosphoserine modification is found at Ser-8. Residues 10–19 show a composition bias toward acidic residues; sequence TEEEEEEEEH. Phosphoserine occurs at positions 29, 49, 57, and 62. Thr-65 carries the post-translational modification Phosphothreonine. Ser-66 bears the Phosphoserine mark. The segment at 95–298 is VWFA-like; the sequence is VIICLDLSEE…LELHNCMAKL (204 aa).

Belongs to the BABAM1 family. In terms of assembly, component of the ARISC complex, at least composed of UIMC1/RAP80, ABRAXAS1, BRCC3/BRCC36, BABAM2 and BABAM1/NBA1. Component of the BRCA1-A complex, at least composed of BRCA1, BARD1, UIMC1/RAP80, ABRAXAS1, BRCC3/BRCC36, BABAM2 and BABAM1/NBA1. In the BRCA1-A complex, interacts directly with ABRAXAS1 and BABAM2. Component of the BRISC complex, at least composed of ABRAXAS2, BRCC3/BRCC36, BABAM2 and BABAM1/NBA1. Identified in a complex with SHMT2 and the other subunits of the BRISC complex.

It is found in the cytoplasm. Its subcellular location is the nucleus. Its function is as follows. Component of the BRCA1-A complex, a complex that specifically recognizes 'Lys-63'-linked ubiquitinated histones H2A and H2AX at DNA lesions sites, leading to target the BRCA1-BARD1 heterodimer to sites of DNA damage at double-strand breaks (DSBs). The BRCA1-A complex also possesses deubiquitinase activity that specifically removes 'Lys-63'-linked ubiquitin on histones H2A and H2AX. In the BRCA1-A complex, it is required for the complex integrity and its localization at DSBs. Component of the BRISC complex, a multiprotein complex that specifically cleaves 'Lys-63'-linked ubiquitin in various substrates. In these 2 complexes, it is probably required to maintain the stability of BABAM2 and help the 'Lys-63'-linked deubiquitinase activity mediated by BRCC3/BRCC36 component. The BRISC complex is required for normal mitotic spindle assembly and microtubule attachment to kinetochores via its role in deubiquitinating NUMA1. Plays a role in interferon signaling via its role in the deubiquitination of the interferon receptor IFNAR1; deubiquitination increases IFNAR1 activity by enhancing its stability and cell surface expression. Down-regulates the response to bacterial lipopolysaccharide (LPS) via its role in IFNAR1 deubiquitination. This Homo sapiens (Human) protein is BRISC and BRCA1-A complex member 1 (BABAM1).